A 986-amino-acid chain; its full sequence is Ephrin type-A receptor 4 (986 aa).

The N-terminal stretch at Met1 to Ala19 is a signal peptide. Topologically, residues Val20–Thr547 are extracellular. The Eph LBD domain occupies Glu30–Arg209. 3 N-linked (GlcNAc...) asparagine glycosylation sites follow: Asn235, Asn340, and Asn408. Fibronectin type-III domains follow at residues Pro328–Ala439 and Ala440–Ser537. The helical transmembrane segment at Val548 to Ile569 threads the bilayer. Residues Ser570–Val986 are Cytoplasmic-facing. 2 positions are modified to phosphotyrosine; by autocatalysis: Tyr596 and Tyr602. The Protein kinase domain occupies Ile621–Ile882. Residues Ile627–Val635 and Lys653 each bind ATP. Asp746 serves as the catalytic Proton acceptor. 2 positions are modified to phosphotyrosine; by autocatalysis: Tyr779 and Tyr928. The SAM domain maps to Ser911–Gln975. The short motif at Val984–Val986 is the PDZ-binding element.

This sequence belongs to the protein kinase superfamily. Tyr protein kinase family. Ephrin receptor subfamily. As to quaternary structure, heterotetramer upon binding of the ligand. The heterotetramer is composed of an ephrin dimer and a receptor dimer. Oligomerization is probably required to induce biological responses. Interacts (phosphorylated at position Tyr-602) with FYN. Interacts (via PDZ motif) with SIPA1L1 (via PDZ domain); controls neuronal morphology through regulation of the RAP1 (RAP1A or RAP1B) and RAP2 (RAP2A, RAP2B or RAP2C) GTPases. Interacts with CDK5, CDK5R1 and NGEF; upon activation by EFNA1 induces NGEF phosphorylation by the kinase CDK5. Interacts with CHN1; effector of EPHA4 in axon guidance linking EPHA4 activation to RAC1 regulation. Forms a ternary complex composed of ADAM10, CADH1 and EPHA4; within the complex, CADH1 is cleaved by ADAM10 which disrupts adherens junctions. As to expression, expressed in inner and outer pillar cells of the organ of Corti (at protein level). Highest expression in the adult brain and retina and also detectable in kidney, lung, skeletal muscle and thymus. Not detected in heart and liver. Expressed in myogenic progenitor cells.

It is found in the cell membrane. The protein resides in the cell projection. The protein localises to the axon. Its subcellular location is the dendrite. It localises to the postsynaptic density membrane. It is found in the early endosome. The protein resides in the cell junction. The protein localises to the adherens junction. The enzyme catalyses L-tyrosyl-[protein] + ATP = O-phospho-L-tyrosyl-[protein] + ADP + H(+). Its function is as follows. Receptor tyrosine kinase which binds membrane-bound ephrin family ligands residing on adjacent cells, leading to contact-dependent bidirectional signaling into neighboring cells. The signaling pathway downstream of the receptor is referred to as forward signaling while the signaling pathway downstream of the ephrin ligand is referred to as reverse signaling. Highly promiscuous, it has the unique property among Eph receptors to bind and to be physiologically activated by both GPI-anchored ephrin-A and transmembrane ephrin-B ligands including EFNA1 and EFNB3. Upon activation by ephrin ligands, modulates cell morphology and integrin-dependent cell adhesion through regulation of the Rac, Rap and Rho GTPases activity. Plays an important role in the development of the nervous system controlling different steps of axonal guidance including the establishment of the corticospinal projections. May also control the segregation of motor and sensory axons during neuromuscular circuit developmen. In addition to its role in axonal guidance plays a role in synaptic plasticity. Activated by EFNA1 phosphorylates CDK5 at 'Tyr-15' which in turn phosphorylates NGEF regulating RHOA and dendritic spine morphogenesis. In the nervous system, also plays a role in repair after injury preventing axonal regeneration and in angiogenesis playing a role in central nervous system vascular formation. Additionally, its promiscuity makes it available to participate in a variety of cell-cell signaling regulating for instance the development of the thymic epithelium. During development of the cochlear organ of Corti, regulates pillar cell separation by forming a ternary complex with ADAM10 and CADH1 which facilitates the cleavage of CADH1 by ADAM10 and disruption of adherens junctions. Phosphorylates CAPRIN1, promoting CAPRIN1-dependent formation of a membraneless compartment. This chain is Ephrin type-A receptor 4 (Epha4), found in Mus musculus (Mouse).